Consider the following 264-residue polypeptide: MSNVRSDKPFVLAGRTFESRLLVGTGKYIDMEQTRLAIEASGAEIVTVAVRRTNLGQNPGEPNLLDVLPPDRYTILPNTAGCFDATEAVRTCRLSRELLDGRNLVKLEVLADQKTLFPNVIETLKAAEILVKDGFDVMVYTSDDPIIARQLAEIGCIAIMPLAGLIGSGLGICNPYNLQIILEETKVPVLVDAGVGTASDATIAMELGCEAVLMNSAIAHAQQPVMMAEAMKHAVIAGRLAYLAGRMPRKLYASASSPLDGLIK.

Lysine 106 serves as the catalytic Schiff-base intermediate with DXP. 1-deoxy-D-xylulose 5-phosphate-binding positions include glycine 167, 193-194, and 215-216; these read AG and NS.

The protein belongs to the ThiG family. Homotetramer. Forms heterodimers with either ThiH or ThiS.

The protein localises to the cytoplasm. The catalysed reaction is [ThiS sulfur-carrier protein]-C-terminal-Gly-aminoethanethioate + 2-iminoacetate + 1-deoxy-D-xylulose 5-phosphate = [ThiS sulfur-carrier protein]-C-terminal Gly-Gly + 2-[(2R,5Z)-2-carboxy-4-methylthiazol-5(2H)-ylidene]ethyl phosphate + 2 H2O + H(+). The protein operates within cofactor biosynthesis; thiamine diphosphate biosynthesis. Functionally, catalyzes the rearrangement of 1-deoxy-D-xylulose 5-phosphate (DXP) to produce the thiazole phosphate moiety of thiamine. Sulfur is provided by the thiocarboxylate moiety of the carrier protein ThiS. In vitro, sulfur can be provided by H(2)S. In Pseudomonas savastanoi pv. phaseolicola (strain 1448A / Race 6) (Pseudomonas syringae pv. phaseolicola (strain 1448A / Race 6)), this protein is Thiazole synthase.